Consider the following 230-residue polypeptide: 2,3-bisphosphoglycerate-dependent phosphoglycerate mutase (230 aa).

Substrate-binding positions include 8–15 (RHGESEWN), 21–22 (TG), arginine 60, 87–90 (ERHY), lysine 98, 114–115 (RR), and 183–184 (GN). Histidine 9 functions as the Tele-phosphohistidine intermediate in the catalytic mechanism. The active-site Proton donor/acceptor is the glutamate 87.

The protein belongs to the phosphoglycerate mutase family. BPG-dependent PGAM subfamily.

It catalyses the reaction (2R)-2-phosphoglycerate = (2R)-3-phosphoglycerate. Its pathway is carbohydrate degradation; glycolysis; pyruvate from D-glyceraldehyde 3-phosphate: step 3/5. Its function is as follows. Catalyzes the interconversion of 2-phosphoglycerate and 3-phosphoglycerate. In Streptococcus sanguinis (strain SK36), this protein is 2,3-bisphosphoglycerate-dependent phosphoglycerate mutase.